The primary structure comprises 447 residues: MREIVHLQTGQCGNQIGAAFWQNISGEHGLDSNGVYNGTSELQLERMSVYFNEASGNKYVPRAVLVDLEPGTMDAVRAGPFGQLFRPDNFVFGQSGAGNNWAKGHYTEGAELVDQVLDVVRREAEGCDCLQGFQITHSLGGGTGAGMGTLLISKIREEFPDRMMATFSVVPSPKVSDTVVEPYNATLSVHQLVENSDETFCIDNEALYDICMRTLKLSNPSYGDLNHLVSAVMSGVTTCLRFPGQLNSDLRKLAVNMVPFPRLHFFMVGFAPLTSRGAHSFRAVSVPELTQQMFDPKNMMAASDFRNGRYLTCSAIFRGKVAMKDVEDQMRNVQNKNSSYFVEWIPNNVQTALCSIPPRGLKMSSTFVGNATAIQELFKRVGEQFTAMFRRKAFLHWYTGEGMDEMEFTEAESNMNDLVSEYQQYQDAGVDEEEEEYEEEAPLEEEV.

Residues Gln-11, Glu-69, Ser-138, Gly-142, Thr-143, Gly-144, Asn-204, and Asn-226 each coordinate GTP. Residue Glu-69 participates in Mg(2+) binding. The segment at 426–447 (QDAGVDEEEEEYEEEAPLEEEV) is disordered. Residues 429–447 (GVDEEEEEYEEEAPLEEEV) show a composition bias toward acidic residues.

The protein belongs to the tubulin family. Dimer of alpha and beta chains. A typical microtubule is a hollow water-filled tube with an outer diameter of 25 nm and an inner diameter of 15 nM. Alpha-beta heterodimers associate head-to-tail to form protofilaments running lengthwise along the microtubule wall with the beta-tubulin subunit facing the microtubule plus end conferring a structural polarity. Microtubules usually have 13 protofilaments but different protofilament numbers can be found in some organisms and specialized cells. Requires Mg(2+) as cofactor.

It is found in the cytoplasm. Its subcellular location is the cytoskeleton. In terms of biological role, tubulin is the major constituent of microtubules, a cylinder consisting of laterally associated linear protofilaments composed of alpha- and beta-tubulin heterodimers. Microtubules grow by the addition of GTP-tubulin dimers to the microtubule end, where a stabilizing cap forms. Below the cap, tubulin dimers are in GDP-bound state, owing to GTPase activity of alpha-tubulin. The protein is Tubulin beta-2 chain (TUB2) of Colletotrichum gloeosporioides (Anthracnose fungus).